The following is a 215-amino-acid chain: Transmembrane protein 267 (215 aa).

The next 3 membrane-spanning stretches (helical) occupy residues 77–97 (FGEIILAGFLASVIDIDHFLL), 114–134 (FLHCSTVIPTVVLTLKFTMHF), and 178–198 (FWLYVIITSSLPHICSFVMYF).

It localises to the membrane. The sequence is that of Transmembrane protein 267 (TMEM267) from Bos taurus (Bovine).